The sequence spans 109 residues: Thioredoxin (109 aa).

One can recognise a Thioredoxin domain in the interval 2–109; the sequence is TNCIVELTDG…LKDFLNLYLK (108 aa). C33 and C36 form a disulfide bridge.

It belongs to the thioredoxin family.

Functionally, participates in various redox reactions through the reversible oxidation of its active center dithiol to a disulfide and catalyzes dithiol-disulfide exchange reactions. This is Thioredoxin (trxA) from Buchnera aphidicola subsp. Baizongia pistaciae (strain Bp).